We begin with the raw amino-acid sequence, 115 residues long: U3-lycotoxin-Ls1a (115 aa).

The first 20 residues, 1-20, serve as a signal peptide directing secretion; that stretch reads MKFVLLFGVLLVTFFSYSSA. A propeptide spanning residues 21–44 is cleaved from the precursor; sequence EMLDDFDQADEDELLSLIEKGEAR. Cystine bridges form between C48-C63, C55-C72, C62-C87, and C74-C85.

The protein belongs to the neurotoxin 19 (CSTX) family. 01 subfamily. In terms of tissue distribution, expressed by the venom gland.

It localises to the secreted. This Lycosa singoriensis (Wolf spider) protein is U3-lycotoxin-Ls1a.